A 238-amino-acid chain; its full sequence is Large ribosomal subunit protein uL1 (238 aa).

This sequence belongs to the universal ribosomal protein uL1 family. As to quaternary structure, part of the 50S ribosomal subunit.

Functionally, binds directly to 23S rRNA. The L1 stalk is quite mobile in the ribosome, and is involved in E site tRNA release. In terms of biological role, protein L1 is also a translational repressor protein, it controls the translation of the L11 operon by binding to its mRNA. This chain is Large ribosomal subunit protein uL1, found in Nostoc sp. (strain PCC 7120 / SAG 25.82 / UTEX 2576).